The primary structure comprises 179 residues: Stathmin-2 (179 aa).

The interval 1-26 (MAKTAMAYKEKMKELSMLSLICSCFY) is membrane attachment. Serine 16 is modified (phosphoserine). S-palmitoyl cysteine attachment occurs at residues cysteine 22 and cysteine 24. Residues 38–179 (DDMEVKQINK…NKELQVELSG (142 aa)) form the SLD domain. The tract at residues 39–96 (DMEVKQINKRASGQAFELILKPPSPISEAPRTLASPKKKDLSLEEIQKKLEAAEERRK) is regulatory/phosphorylation domain. Serine 50, serine 62, serine 73, and serine 97 each carry phosphoserine. The stretch at 75–179 (KKKDLSLEEI…NKELQVELSG (105 aa)) forms a coiled coil.

The protein belongs to the stathmin family. Interacts with MAPK8. Interacts with ITM2C. Interacts with KIFBP. Interacts (via the N-terminal region) with CIB1 (via C-terminal region); the interaction is direct, occurs in a calcium-dependent manner and attenuates the neurite outgrowth inhibition of STMN2. Sumoylated. Post-translationally, phosphorylated mostly by MAPK8, but also by MAPK9 and MAPK10 in the developing brain cortex. In terms of processing, N-terminal palmitoylation promotes specific anchoring to the cytosolic leaflet of Golgi membranes and subsequent vesicular trafficking along dendrites and axons. Neuronal Stathmins are substrates for palmitoyltransferases ZDHHC3, ZDHHC7 and ZDHHC15. Neuron specific.

It localises to the cytoplasm. The protein resides in the perinuclear region. It is found in the cell projection. The protein localises to the growth cone. Its subcellular location is the membrane. It localises to the axon. The protein resides in the golgi apparatus. It is found in the endosome. The protein localises to the lamellipodium. Its function is as follows. Regulator of microtubule stability. When phosphorylated by MAPK8, stabilizes microtubules and consequently controls neurite length in cortical neurons. In the developing brain, negatively regulates the rate of exit from multipolar stage and retards radial migration from the ventricular zone. The protein is Stathmin-2 (STMN2) of Homo sapiens (Human).